The following is a 168-amino-acid chain: DNA damage-inducible transcript 3 protein (168 aa).

Positions 10–18 (FGALSSWEL) are interaction with TRIB3. Residues 10–26 (FGALSSWELEAWYEDLQ) are N-terminal. Phosphoserine; by CK2 is present on residues Ser14, Ser15, Ser30, and Ser31. The tract at residues 31 to 141 (SDENRGTCVS…QLAEENERLK (111 aa)) is disordered. The segment covering 76-90 (SQSPCSPESSQSSLA) has biased composition (low complexity). A phosphoserine; by MAPK14 mark is found at Ser78 and Ser81. The bZIP domain maps to 98–161 (QGRTRKRKQS…EATRRALIDR (64 aa)). The tract at residues 100-129 (RTRKRKQSGQSPARAGKQRMKEKEQENERK) is basic motif. Residues 118-141 (RMKEKEQENERKVAQLAEENERLK) are compositionally biased toward basic and acidic residues. The interval 133-147 (LAEENERLKQEIERL) is leucine-zipper.

The protein belongs to the bZIP family. Heterodimer. Interacts with TCF7L2/TCF4, EP300/P300, HDAC1, HDAC5 and HDAC6. Interacts with TRIB3 which blocks its association with EP300/P300. Interacts with FOXO3, CEBPB and ATF4. In terms of processing, ubiquitinated, leading to its degradation by the proteasome. Phosphorylation at serine residues by MAPK14 enhances its transcriptional activation activity while phosphorylation at serine residues by CK2 inhibits its transcriptional activation activity.

The protein resides in the cytoplasm. It is found in the nucleus. Its function is as follows. Multifunctional transcription factor in ER stress response. Plays an essential role in the response to a wide variety of cell stresses and induces cell cycle arrest and apoptosis in response to ER stress. Plays a dual role both as an inhibitor of CCAAT/enhancer-binding protein (C/EBP) function and as an activator of other genes. Acts as a dominant-negative regulator of C/EBP-induced transcription: dimerizes with members of the C/EBP family, impairs their association with C/EBP binding sites in the promoter regions, and inhibits the expression of C/EBP regulated genes. Positively regulates the transcription of TRIB3, IL6, IL8, IL23, TNFRSF10B/DR5, PPP1R15A/GADD34, BBC3/PUMA, BCL2L11/BIM and ERO1L. Negatively regulates; expression of BCL2 and MYOD1, ATF4-dependent transcriptional activation of asparagine synthetase (ASNS), CEBPA-dependent transcriptional activation of hepcidin (HAMP) and CEBPB-mediated expression of peroxisome proliferator-activated receptor gamma (PPARG). Inhibits the canonical Wnt signaling pathway by binding to TCF7L2/TCF4, impairing its DNA-binding properties and repressing its transcriptional activity. Plays a regulatory role in the inflammatory response through the induction of caspase-11 (CASP4/CASP11) which induces the activation of caspase-1 (CASP1) and both these caspases increase the activation of pro-IL1B to mature IL1B which is involved in the inflammatory response. The polypeptide is DNA damage-inducible transcript 3 protein (DDIT3) (Bos taurus (Bovine)).